Reading from the N-terminus, the 173-residue chain is T-cell receptor beta-1 chain C region (173 aa).

The tract at residues 1–146 is c region; it reads EDLRNVTPPK…GVLSATILYE (146 aa). Cys-31 and Cys-71 are disulfide-bonded. Asn-67 and Asn-116 each carry an N-linked (GlcNAc...) asparagine glycan. A helical membrane pass occupies residues 146-167; that stretch reads EILLGKATLYAVLVSTLVVMAM. The Cytoplasmic portion of the chain corresponds to 168–173; that stretch reads VKRKNS.

It is found in the membrane. The chain is T-cell receptor beta-1 chain C region from Mus musculus (Mouse).